The chain runs to 404 residues: Nesprin-4 (404 aa).

2 disordered regions span residues 1–91 (MALS…GGKH) and 277–347 (GQRG…GAPD). Residues 1-355 (MALSLPLGPR…PDPASRQPLT (355 aa)) are Cytoplasmic-facing. Residues 39 to 52 (EESTSPEQAQTLGQ) are compositionally biased toward polar residues. Residues 307 to 320 (HQKRLARHQRHSLL) show a composition bias toward basic residues. Positions 347 to 404 (DPASRQPLTFLLILFLLFLLLVGAMFLLPASGGPCCSHARIPRTPYLVLSYVNGLPPV) constitute a KASH domain. A helical; Anchor for type IV membrane protein transmembrane segment spans residues 356-376 (FLLILFLLFLLLVGAMFLLPA). Over 377-404 (SGGPCCSHARIPRTPYLVLSYVNGLPPV) the chain is Perinuclear space.

It belongs to the nesprin family. Core component of LINC complexes which are composed of inner nuclear membrane SUN domain-containing proteins coupled to outer nuclear membrane KASH domain-containing nesprins. SUN and KASH domain-containing proteins seem to bind each other promiscuously; however, differentially expression of LINC complex constituents can give rise to specific assemblies. Probably part of a SUN1-containing LINC complex. Interacts with kinesins KIF5B and KLC1. In terms of processing, the disulfid bond with SUN1 or SUN2 is required for stability of the respective LINC complex under tensile forces.

It is found in the nucleus outer membrane. In terms of biological role, as a component of the LINC (LInker of Nucleoskeleton and Cytoskeleton) complex, involved in the connection between the nuclear lamina and the cytoskeleton. The nucleocytoplasmic interactions established by the LINC complex play an important role in the transmission of mechanical forces across the nuclear envelope and in nuclear movement and positioning. Behaves as a kinesin cargo, providing a functional binding site for kinesin-1 at the nuclear envelope. Hence may contribute to the establishment of secretory epithelial morphology by promoting kinesin-dependent apical migration of the centrosome and Golgi apparatus and basal localization of the nucleus. This chain is Nesprin-4 (SYNE4), found in Homo sapiens (Human).